Here is an 88-residue protein sequence, read N- to C-terminus: Small ribosomal subunit protein bS20 (88 aa).

Positions 1–27 (MANSKSAKKRALQSEKRRQHNASRRSM) are disordered.

This sequence belongs to the bacterial ribosomal protein bS20 family.

Functionally, binds directly to 16S ribosomal RNA. This is Small ribosomal subunit protein bS20 from Shewanella oneidensis (strain ATCC 700550 / JCM 31522 / CIP 106686 / LMG 19005 / NCIMB 14063 / MR-1).